Here is a 137-residue protein sequence, read N- to C-terminus: Holo-[acyl-carrier-protein] synthase (137 aa).

Mg(2+) contacts are provided by Asp-8 and Glu-57.

It belongs to the P-Pant transferase superfamily. AcpS family. Mg(2+) serves as cofactor.

Its subcellular location is the cytoplasm. The enzyme catalyses apo-[ACP] + CoA = holo-[ACP] + adenosine 3',5'-bisphosphate + H(+). In terms of biological role, transfers the 4'-phosphopantetheine moiety from coenzyme A to a Ser of acyl-carrier-protein. This chain is Holo-[acyl-carrier-protein] synthase, found in Mesorhizobium japonicum (strain LMG 29417 / CECT 9101 / MAFF 303099) (Mesorhizobium loti (strain MAFF 303099)).